A 160-amino-acid chain; its full sequence is uncharacterized protein (160 aa).

One can recognise an N-acetyltransferase domain in the interval 7 to 151 (LLINYKTLEE…NPLIWHPDMD (145 aa)).

This is an uncharacterized protein from Bacillus subtilis (strain 168).